Here is a 229-residue protein sequence, read N- to C-terminus: Cell division topological specificity factor homolog, chloroplastic (229 aa).

A chloroplast-targeting transit peptide spans 1–30 (MAMSSGTLRISATLVSPYHHHHRNRLSLPS). Positions 35 to 141 (VDFTGFISNG…KMILFSDRCD (107 aa)) are interaction with MIND1. Positions 142–169 (VSDEAKRKIVNNIIHALSDFVEIESEEK) are homodimerization.

Belongs to the MinE family. Homodimer. Interacts with MIND1. These interactions are required for proper intraplastidic localization. Binds to ARC3. Expressed in green tissues, especially at the shoot apex. Also present in leaves, stems, buds, and flowers, especially in sepals, siliques (tip and base), and anthers (mostly in pollen grains).

Its subcellular location is the plastid. The protein localises to the chloroplast. Acts as a topological specificity factor during plastid division and specify plastid constriction sites (such as the Z-ring) in a MCD1-dependent manner. Especially involved in epidermal plastids division in a FTSZ1-dependent manner. Required for the proper formation of FtsZ rings at the division site in nongreen plastids (e.g. etioplasts). May contribute to gravitropism in stems and hypocotyls. Stimulates MIND1 ATPase activity. In cooperation with MIND1, prevents FtsZ ring formation anywhere outside of the mid-plastids. The sequence is that of Cell division topological specificity factor homolog, chloroplastic from Arabidopsis thaliana (Mouse-ear cress).